A 112-amino-acid chain; its full sequence is Protein lin-52 homolog (112 aa).

The protein belongs to the lin-52 family. As to quaternary structure, component of the DREAM complex. As to expression, expressed in the brain, liver and retina. Highly expressed in the retinal ganglion cell and inner nuclear layers at the parr stage. Expressed at a lower level in inner segments of some retinal photoreceptors.

May be involved in retinal development. The sequence is that of Protein lin-52 homolog (lin52) from Oncorhynchus mykiss (Rainbow trout).